Here is a 253-residue protein sequence, read N- to C-terminus: Large ribosomal subunit protein uL10m (253 aa).

A mitochondrion-targeting transit peptide spans 1–24 (MANLMQRSLPLTTTRTPVLQFLRF).

The protein belongs to the universal ribosomal protein uL10 family. In terms of assembly, component of the mitochondrial ribosome large subunit (39S) which comprises a 16S rRNA and about 50 distinct proteins.

It localises to the mitochondrion. The sequence is that of Large ribosomal subunit protein uL10m (mRpL10) from Drosophila pseudoobscura pseudoobscura (Fruit fly).